Reading from the N-terminus, the 1414-residue chain is DNA-directed RNA polymerase subunit beta' (1414 aa).

Zn(2+) is bound by residues Cys70, Cys72, Cys85, and Cys88. Asp461, Asp463, and Asp465 together coordinate Mg(2+). Zn(2+)-binding residues include Cys820, Cys894, Cys901, and Cys904.

This sequence belongs to the RNA polymerase beta' chain family. The RNAP catalytic core consists of 2 alpha, 1 beta, 1 beta' and 1 omega subunit. When a sigma factor is associated with the core the holoenzyme is formed, which can initiate transcription. Mg(2+) serves as cofactor. The cofactor is Zn(2+).

It catalyses the reaction RNA(n) + a ribonucleoside 5'-triphosphate = RNA(n+1) + diphosphate. Its function is as follows. DNA-dependent RNA polymerase catalyzes the transcription of DNA into RNA using the four ribonucleoside triphosphates as substrates. This is DNA-directed RNA polymerase subunit beta' from Cupriavidus taiwanensis (strain DSM 17343 / BCRC 17206 / CCUG 44338 / CIP 107171 / LMG 19424 / R1) (Ralstonia taiwanensis (strain LMG 19424)).